Consider the following 288-residue polypeptide: Mortality factor 4-like protein 2 (288 aa).

A compositionally biased stretch (polar residues) spans 1 to 15 (MSSRKQGSQPRGQQS). Residues 1–113 (MSSRKQGSQP…RADPTVESEE (113 aa)) form a disordered region. Residue serine 71 is modified to Phosphoserine. An MRG domain is found at 117–288 (NRMEVKVKIP…ASAEYHRKAL (172 aa)).

In terms of assembly, component of the NuA4 histone acetyltransferase complex which contains the catalytic subunit KAT5/TIP60 and the subunits EP400, TRRAP/PAF400, BRD8/SMAP, EPC1, DMAP1/DNMAP1, RUVBL1/TIP49, RUVBL2, ING3, actin, ACTL6A/BAF53A, MORF4L1/MRG15, MORF4L2/MRGX, MRGBP, YEATS4/GAS41 and VPS72/YL1. The NuA4 complex interacts with MYC and the adenovirus E1A protein. MORF4L1 may also participate in the formation of NuA4 related complexes which lack the KAT5/TIP60 catalytic subunit, but which include the SWI/SNF related protein SRCAP. Component of the MSIN3A histone deacetylase complex, which includes SIN3A, HDAC2, ARID4B, MORF4L1, RBBP4/RbAp48, and RBBP7/RbAp46. Interacts with MRFAP1 and RB1. May also interact with one or more as yet undefined members of the TLE (transducin-like enhancer of split) family of transcriptional repressors.

It localises to the nucleus. In terms of biological role, component of the NuA4 histone acetyltransferase complex which is involved in transcriptional activation of select genes principally by acetylation of nucleosomal histone H4 and H2A. This modification may both alter nucleosome - DNA interactions and promote interaction of the modified histones with other proteins which positively regulate transcription. This complex may be required for the activation of transcriptional programs associated with oncogene and proto-oncogene mediated growth induction, tumor suppressor mediated growth arrest and replicative senescence, apoptosis, and DNA repair. The NuA4 complex ATPase and helicase activities seem to be, at least in part, contributed by the association of RUVBL1 and RUVBL2 with EP400. NuA4 may also play a direct role in DNA repair when directly recruited to sites of DNA damage. Also a component of the MSIN3A complex which acts to repress transcription by deacetylation of nucleosomal histones. In Homo sapiens (Human), this protein is Mortality factor 4-like protein 2 (MORF4L2).